The primary structure comprises 32 residues: Snake venom serine proteinase (32 aa).

One can recognise a Peptidase S1 domain in the interval 1 to 32; it reads VIGGDECDINEHRFLVFLTXASGLACGGTLIN.

It belongs to the peptidase S1 family. Snake venom subfamily. In terms of assembly, monomer. Post-translationally, contains 6 disulfide bonds. Glycosylated. As to expression, expressed by the venom gland.

Its subcellular location is the secreted. Its function is as follows. Cleaves a kininogen analog with the release of kallidin (lysyl-bradykinin). Completely cleaves fibrinogen Aalpha chain, partially cleaves Bbeta chain and has no activity on gamma chain. The chain is Snake venom serine proteinase from Bitis arietans (African puff adder).